The primary structure comprises 1733 residues: ATP-binding cassette sub-family A member 17 (1733 aa).

The next 7 membrane-spanning stretches (helical) occupy residues 22-42 (TLIT…VLYL), 262-282 (FPLL…NSVL), 306-326 (AWFI…TVLF), 342-362 (TLIF…AFMM), 372-392 (GTVI…YITF), 403-423 (ILSC…ISLF), and 444-464 (FAQV…IAFL). The 234-residue stretch at 519–752 (IEIQHLYKVF…YGAGYYMTII (234 aa)) folds into the ABC transporter 1 domain. Residue 555-562 (GHNGAGKT) participates in ATP binding. N-linked (GlcNAc...) asparagine glycosylation occurs at asparagine 609. Transmembrane regions (helical) follow at residues 906–926 (LVLS…LTFF), 1082–1102 (LVVN…ILTV), 1128–1148 (LLWD…VFLW), 1160–1180 (IPAV…LVYT), 1192–1212 (CVKL…LVTV), 1230–1250 (IFLI…YYNF), and 1287–1307 (IGKY…MLFL). The 234-residue stretch at 1366–1599 (LVVKEVSKVY…FGISYSLQAK (234 aa)) folds into the ABC transporter 2 domain. 1401 to 1408 (GLNGAGKT) is an ATP binding site. Over residues 1681–1692 (ESSTKEQIQQEQ) the composition is skewed to polar residues. The tract at residues 1681-1733 (ESSTKEQIQQEQAVLASPSPPSNSRPISSPPSRLSSPTPKPLPSPPPSEPILL) is disordered. A compositionally biased stretch (low complexity) spans 1704-1717 (SRPISSPPSRLSSP). The span at 1718 to 1733 (TPKPLPSPPPSEPILL) shows a compositional bias: pro residues.

This sequence belongs to the ABC transporter superfamily. ABCA family. In terms of processing, N-glycosylated. As to expression, in the testis, detected predominantly in elongated spermatids at the late stage of germ cell development and in sperm, with no expression detected in immature germ cells such as spermatogonia and spermatocytes or in somatic cells such as Sertoli cells (at protein level). Expressed in the head and tail midpiece of elongated spermatids and sperm (at protein level). Expressed exclusively in the testis.

The protein localises to the endoplasmic reticulum membrane. Its subcellular location is the cytoplasm. It catalyses the reaction cholesterol(in) + ATP + H2O = cholesterol(out) + ADP + phosphate + H(+). Its function is as follows. Promotes cholesterol efflux from sperm which renders sperm capable of fertilization. Has also been shown to decrease levels of intracellular esterified neutral lipids including cholesteryl esters, fatty acid esters and triacylglycerols. The polypeptide is ATP-binding cassette sub-family A member 17 (Mus musculus (Mouse)).